The sequence spans 374 residues: tRNA-specific 2-thiouridylase MnmA (374 aa).

Residues 12–19 (GMSGGVDS) and Met38 each bind ATP. Residues 98 to 100 (NPD) form an interaction with target base in tRNA region. The active-site Nucleophile is the Cys103. A disulfide bond links Cys103 and Cys202. Gly128 contributes to the ATP binding site. Residues 152–154 (KDQ) form an interaction with tRNA region. Residue Cys202 is the Cysteine persulfide intermediate of the active site. The interval 316–317 (RY) is interaction with tRNA.

It belongs to the MnmA/TRMU family.

Its subcellular location is the cytoplasm. It catalyses the reaction S-sulfanyl-L-cysteinyl-[protein] + uridine(34) in tRNA + AH2 + ATP = 2-thiouridine(34) in tRNA + L-cysteinyl-[protein] + A + AMP + diphosphate + H(+). Functionally, catalyzes the 2-thiolation of uridine at the wobble position (U34) of tRNA, leading to the formation of s(2)U34. This is tRNA-specific 2-thiouridylase MnmA from Vibrio campbellii (strain ATCC BAA-1116).